The chain runs to 501 residues: Microtubule-associated protein mmb1 (501 aa).

Composition is skewed to polar residues over residues 61 to 95 (NISS…TNNV), 103 to 122 (RNPS…SNNA), and 132 to 168 (HENS…SSNA). Disordered regions lie at residues 61–274 (NISS…VKVN), 328–381 (VSRN…TTGN), and 478–501 (NQTS…NRMI). Positions 234–252 (SSVVRPPTRTSTTRPLSRV) are enriched in low complexity. Composition is skewed to polar residues over residues 253–274 (NVTN…VKVN), 367–381 (SRIQ…TTGN), and 478–495 (NQTS…SSPL).

It localises to the cytoplasm. Its subcellular location is the cytoskeleton. Involved in the cell polarity process and in regulation of microtubule growth. Has a role in meiosis. Involved in microtubule dynamics. Binds to mitochondria and microtubules, attaching the tubular mitochondria to the microtubule lattice at multiple discrete interaction sites. The chain is Microtubule-associated protein mmb1 from Schizosaccharomyces pombe (strain 972 / ATCC 24843) (Fission yeast).